A 195-amino-acid chain; its full sequence is Ribosome maturation factor RimM (195 aa).

The PRC barrel domain occupies 101–191 (ADEWYPKDLI…YLTLDPPGGL (91 aa)).

Belongs to the RimM family. As to quaternary structure, binds ribosomal protein uS19.

It is found in the cytoplasm. Functionally, an accessory protein needed during the final step in the assembly of 30S ribosomal subunit, possibly for assembly of the head region. Essential for efficient processing of 16S rRNA. May be needed both before and after RbfA during the maturation of 16S rRNA. It has affinity for free ribosomal 30S subunits but not for 70S ribosomes. The protein is Ribosome maturation factor RimM of Bifidobacterium adolescentis (strain ATCC 15703 / DSM 20083 / NCTC 11814 / E194a).